The sequence spans 326 residues: Beta-ketoacyl-[acyl-carrier-protein] synthase III (326 aa).

Catalysis depends on residues cysteine 120 and histidine 253. The tract at residues 254–258 (QANIR) is ACP-binding. The active site involves asparagine 283.

This sequence belongs to the thiolase-like superfamily. FabH family. In terms of assembly, homodimer.

The protein localises to the cytoplasm. It catalyses the reaction malonyl-[ACP] + acetyl-CoA + H(+) = 3-oxobutanoyl-[ACP] + CO2 + CoA. The protein operates within lipid metabolism; fatty acid biosynthesis. Catalyzes the condensation reaction of fatty acid synthesis by the addition to an acyl acceptor of two carbons from malonyl-ACP. Catalyzes the first condensation reaction which initiates fatty acid synthesis and may therefore play a role in governing the total rate of fatty acid production. Possesses both acetoacetyl-ACP synthase and acetyl transacylase activities. Its substrate specificity determines the biosynthesis of branched-chain and/or straight-chain of fatty acids. This chain is Beta-ketoacyl-[acyl-carrier-protein] synthase III, found in Cupriavidus necator (strain ATCC 17699 / DSM 428 / KCTC 22496 / NCIMB 10442 / H16 / Stanier 337) (Ralstonia eutropha).